Reading from the N-terminus, the 436-residue chain is GTPase Der (436 aa).

EngA-type G domains follow at residues proline 4–glutamate 167 and isoleucine 176–lysine 351. GTP contacts are provided by residues glycine 10–serine 17, aspartate 57–isoleucine 61, asparagine 119–aspartate 122, glycine 182–serine 189, aspartate 229–methionine 233, and asparagine 294–aspartate 297. In terms of domain architecture, KH-like spans lysine 352–asparagine 436.

The protein belongs to the TRAFAC class TrmE-Era-EngA-EngB-Septin-like GTPase superfamily. EngA (Der) GTPase family. In terms of assembly, associates with the 50S ribosomal subunit.

Its function is as follows. GTPase that plays an essential role in the late steps of ribosome biogenesis. The chain is GTPase Der from Staphylococcus saprophyticus subsp. saprophyticus (strain ATCC 15305 / DSM 20229 / NCIMB 8711 / NCTC 7292 / S-41).